Consider the following 275-residue polypeptide: Urease accessory protein UreD (275 aa).

It belongs to the UreD family. In terms of assembly, ureD, UreF and UreG form a complex that acts as a GTP-hydrolysis-dependent molecular chaperone, activating the urease apoprotein by helping to assemble the nickel containing metallocenter of UreC. The UreE protein probably delivers the nickel.

It localises to the cytoplasm. In terms of biological role, required for maturation of urease via the functional incorporation of the urease nickel metallocenter. This Cereibacter sphaeroides (strain ATCC 17029 / ATH 2.4.9) (Rhodobacter sphaeroides) protein is Urease accessory protein UreD.